A 213-amino-acid polypeptide reads, in one-letter code: Uridine kinase (213 aa).

Residue 15–22 (GASASGKS) coordinates ATP.

The protein belongs to the uridine kinase family.

It is found in the cytoplasm. The enzyme catalyses uridine + ATP = UMP + ADP + H(+). It catalyses the reaction cytidine + ATP = CMP + ADP + H(+). The protein operates within pyrimidine metabolism; CTP biosynthesis via salvage pathway; CTP from cytidine: step 1/3. It functions in the pathway pyrimidine metabolism; UMP biosynthesis via salvage pathway; UMP from uridine: step 1/1. This Klebsiella pneumoniae (strain 342) protein is Uridine kinase.